Consider the following 500-residue polypeptide: NAD(P)H-quinone oxidoreductase chain 4, chloroplastic (500 aa).

Transmembrane regions (helical) follow at residues Phe-4–Leu-24, Tyr-35–Phe-55, Ile-87–Val-107, Leu-113–Ser-130, Leu-134–Met-154, Phe-167–Leu-187, Val-208–Ile-228, His-242–Ile-262, Ala-272–Ala-292, Ile-305–Asp-325, Gly-330–Gly-350, Leu-386–Thr-406, Leu-416–Met-436, and Leu-462–Val-482.

Belongs to the complex I subunit 4 family.

The protein localises to the plastid. Its subcellular location is the chloroplast thylakoid membrane. It carries out the reaction a plastoquinone + NADH + (n+1) H(+)(in) = a plastoquinol + NAD(+) + n H(+)(out). The enzyme catalyses a plastoquinone + NADPH + (n+1) H(+)(in) = a plastoquinol + NADP(+) + n H(+)(out). In Solanum lycopersicum (Tomato), this protein is NAD(P)H-quinone oxidoreductase chain 4, chloroplastic.